Reading from the N-terminus, the 158-residue chain is Transcription elongation factor GreA (158 aa).

It belongs to the GreA/GreB family.

Necessary for efficient RNA polymerase transcription elongation past template-encoded arresting sites. The arresting sites in DNA have the property of trapping a certain fraction of elongating RNA polymerases that pass through, resulting in locked ternary complexes. Cleavage of the nascent transcript by cleavage factors such as GreA or GreB allows the resumption of elongation from the new 3'terminus. GreA releases sequences of 2 to 3 nucleotides. The chain is Transcription elongation factor GreA from Allorhizobium ampelinum (strain ATCC BAA-846 / DSM 112012 / S4) (Agrobacterium vitis (strain S4)).